A 280-amino-acid chain; its full sequence is Endochitinase A (280 aa).

Residues Met-1–Ala-25 form the signal peptide. A Chitin-binding type-1 domain is found at Gln-26–Ser-60. 4 cysteine pairs are disulfide-bonded: Cys-28–Cys-36, Cys-30–Cys-42, Cys-35–Cys-49, and Cys-53–Cys-58. The segment at Gly-61–Gly-77 is hinge region (poly-Gly). Residues Ala-78–Cys-280 form a catalytic region. Cys-100 and Cys-149 are disulfide-bonded. Glu-144 serves as the catalytic Proton donor. N-linked (GlcNAc...) asparagine glycosylation occurs at Asn-155. Cystine bridges form between Cys-161/Cys-170 and Cys-248/Cys-280. The N-linked (GlcNAc...) asparagine glycan is linked to Asn-277.

This sequence belongs to the glycosyl hydrolase 19 family. Chitinase class IV subfamily.

Its subcellular location is the secreted. It catalyses the reaction Random endo-hydrolysis of N-acetyl-beta-D-glucosaminide (1-&gt;4)-beta-linkages in chitin and chitodextrins.. Inactivated by l-ethyl-3-(3-dimethylaminopropyl)carbodiimide (EDC) in the absence of exogenous nucleophiles (e.g. GlcNAc4, GlcNAc3 and GlcNAc2). Not inhibited by tetra-N-acetylchitopentaose or modified chitotetraose substrate TMG-chitotriomycin-pMP, containing a free, non-acetylated glucosaminyl residue or a N-trimethylamino glucosamine (TMG) residue at the non-reducing terminus, respectively. Functionally, defense against chitin-containing fungal pathogens. Hydrolyzes glycol chitin and tetra-N-acetylchitotetraose in vitro. Its action is countered by fungal polyglycine hydrolases and fungalysin, that cleave the chitin-binding domain from the protein. This chain is Endochitinase A, found in Zea mays (Maize).